The following is a 467-amino-acid chain: 6-phospho-beta-galactosidase (467 aa).

Q19, H116, N159, E160, and N297 together coordinate D-galactose 6-phosphate. E160 serves as the catalytic Proton donor. E375 functions as the Nucleophile in the catalytic mechanism. D-galactose 6-phosphate-binding residues include S428, W429, K435, and Y437.

This sequence belongs to the glycosyl hydrolase 1 family.

The enzyme catalyses a 6-phospho-beta-D-galactoside + H2O = D-galactose 6-phosphate + an alcohol. It functions in the pathway carbohydrate metabolism; lactose degradation; D-galactose 6-phosphate and beta-D-glucose from lactose 6-phosphate: step 1/1. Inhibited by both galactose-6-phosphate and ATP. The chain is 6-phospho-beta-galactosidase from Leptotrichia buccalis (strain ATCC 14201 / DSM 1135 / JCM 12969 / NCTC 10249 / C-1013-b).